Reading from the N-terminus, the 464-residue chain is Ubiquinone biosynthesis monooxygenase COQ6, mitochondrial (464 aa).

Residues methionine 1–leucine 24 constitute a mitochondrion transit peptide.

It belongs to the UbiH/COQ6 family. As to quaternary structure, component of a multi-subunit COQ enzyme complex, composed of at least coq3, coq4, coq5, coq6, coq7 and coq9. Interacts with coq8b and coq7. FAD serves as cofactor.

The protein localises to the mitochondrion inner membrane. The protein resides in the golgi apparatus. It localises to the cell projection. It catalyses the reaction a 4-hydroxy-3-(all-trans-polyprenyl)benzoate + 2 reduced [2Fe-2S]-[ferredoxin] + O2 + 2 H(+) = a 3,4-dihydroxy-5-(all-trans-polyprenyl)benzoate + 2 oxidized [2Fe-2S]-[ferredoxin] + H2O. It carries out the reaction a 2-methoxy-6-(all-trans-polyprenyl)phenol + 2 reduced [2Fe-2S]-[ferredoxin] + O2 + 2 H(+) = a 2-methoxy-6-(all-trans-polyprenyl)benzene-1,4-diol + 2 oxidized [2Fe-2S]-[ferredoxin] + H2O. It participates in cofactor biosynthesis; ubiquinone biosynthesis. Functionally, FAD-dependent monooxygenase required for two non-consecutive steps during ubiquinone biosynthesis. Required for the C5-ring hydroxylation during ubiquinone biosynthesis by catalyzing the hydroxylation of 4-hydroxy-3-(all-trans-polyprenyl)benzoic acid to 3,4-dihydroxy-5-(all-trans-polyprenyl)benzoic acid. Also acts downstream of coq4, for the C1-hydroxylation during ubiquinone biosynthesis by catalyzing the hydroxylation of 2-methoxy-6-(all-trans-polyprenyl)phenol to 2-methoxy-6-(all-trans-polyprenyl)benzene-1,4-diol. The electrons required for the hydroxylation reaction are funneled indirectly to coq6 from NADPH via a ferredoxin/ferredoxin reductase system. The chain is Ubiquinone biosynthesis monooxygenase COQ6, mitochondrial from Xenopus tropicalis (Western clawed frog).